The primary structure comprises 148 residues: ASCH domain-containing ribonuclease (148 aa).

Residues 13–70 (SLWPEFAKAIVSGKKTVEFRRRIPLPALSARIWIYATRPVKSVIGFAYLEAIVQGDVN) form the ASCH domain.

It depends on Mn(2+) as a cofactor. Ni(2+) is required as a cofactor.

Functionally, shows sequence-specific endoribonuclease activity towards single-stranded RNA (ssRNA), with a preference for the bond between pyrimidine and adenine nucleotides. May also have 5'-exonuclease activity. This Zymomonas mobilis subsp. mobilis (strain ATCC 10988 / DSM 424 / LMG 404 / NCIMB 8938 / NRRL B-806 / ZM1) protein is ASCH domain-containing ribonuclease.